We begin with the raw amino-acid sequence, 764 residues long: Putative alpha-1,3-mannosyltransferase MNN13 (764 aa).

The Cytoplasmic segment spans residues 1 to 13 (MIKPILGTKKIRR). Residues 14–34 (VICIIIGLFCILLLIGIFKHN) traverse the membrane as a helical segment. Topologically, residues 35–764 (STNSVNNEAS…YLGDVWVGKY (730 aa)) are lumenal. Residues N45 and N204 are each glycosylated (N-linked (GlcNAc...) asparagine).

This sequence belongs to the MNN1/MNT family.

It localises to the golgi apparatus membrane. It participates in protein modification; protein glycosylation. In terms of biological role, responsible for addition of the terminal mannose residues to the outer chain of core N-linked polysaccharides and to O-linked mannotriose. Implicated in late Golgi modifications. The polypeptide is Putative alpha-1,3-mannosyltransferase MNN13 (MNN13) (Candida albicans (strain SC5314 / ATCC MYA-2876) (Yeast)).